The sequence spans 358 residues: Mannonate dehydratase (358 aa).

It belongs to the mannonate dehydratase family. Requires Fe(2+) as cofactor. The cofactor is Mn(2+).

It carries out the reaction D-mannonate = 2-dehydro-3-deoxy-D-gluconate + H2O. Its pathway is carbohydrate metabolism; pentose and glucuronate interconversion. Catalyzes the dehydration of D-mannonate. In Shouchella clausii (strain KSM-K16) (Alkalihalobacillus clausii), this protein is Mannonate dehydratase.